The sequence spans 131 residues: Cell cycle protein GpsB (131 aa).

Positions 39-76 form a coiled coil; the sequence is LDGIIRDYEAFTNEIDRLKEENTKLFSRVDELTKQLSV. The tract at residues 111-131 is disordered; the sequence is KLSDSSVDNHDDGNHSDVDQY. Basic and acidic residues predominate over residues 117–131; the sequence is VDNHDDGNHSDVDQY.

The protein belongs to the GpsB family. In terms of assembly, forms polymers through the coiled coil domains. Interacts with PBP1, MreC and EzrA.

Its subcellular location is the cytoplasm. Functionally, divisome component that associates with the complex late in its assembly, after the Z-ring is formed, and is dependent on DivIC and PBP2B for its recruitment to the divisome. Together with EzrA, is a key component of the system that regulates PBP1 localization during cell cycle progression. Its main role could be the removal of PBP1 from the cell pole after pole maturation is completed. Also contributes to the recruitment of PBP1 to the division complex. Not essential for septum formation. The protein is Cell cycle protein GpsB of Lacticaseibacillus casei (strain BL23) (Lactobacillus casei).